The sequence spans 521 residues: MNTLSSARSVAIYVGPVRSSRSASVLAHEQAKSSITEEHKTYDEIPRPNKFKFMRAFMPGGEFQNASITEYTSAMRKRYGDIYVMPGMFGRKDWVTTFNTKDIEMVFRNEGIWPRRDGLDSIVYFREHVRPDVYGEVQGLVASQNEAWGKLRSAINPIFMQPRGLRMYYEPLSNINNEFIERIKEIRDPKTLEVPEDFTDEISRLVFESLGLVAFDRQMGLIRKNRDNSDALTLFQTSRDIFRLTFKLDIQPSMWKIISTPTYRKMKRTLNDSLNVAQKMLKENQDALEKRRQAGEKINSNSMLERLMEIDPKVAVIMSLDILFAGVDATATLLSAVLLCLSKHPDKQAKLREELLSIMPTKDSLLNEENMKDMPYLRAVIKETLRYYPNGLGTMRTCQNDVILSGYRVPKGTTVLLGSNVLMKEATYYPRPDEFLPERWLRDPETGKKMQVSPFTFLPFGFGPRMCIGKRVVDLEMETTVAKLIRNFHVEFNRDASRPFKTMFVMEPAITFPFKFTDIEQ.

A mitochondrion-targeting transit peptide spans 1-19 (MNTLSSARSVAIYVGPVRS). Heme is bound at residue cysteine 467.

Belongs to the cytochrome P450 family. Heme is required as a cofactor.

It is found in the mitochondrion membrane. This chain is Probable cytochrome P450 12d1 proximal, mitochondrial (Cyp12d1-p), found in Drosophila melanogaster (Fruit fly).